We begin with the raw amino-acid sequence, 129 residues long: Putative F-box protein At3g42722 (129 aa).

The 47-residue stretch at 4–50 (MASIDCLPDELLVGILSFILTNEAASTSILSKRWRTLFAFSHNLDCN) folds into the F-box domain.

In Arabidopsis thaliana (Mouse-ear cress), this protein is Putative F-box protein At3g42722.